The following is a 372-amino-acid chain: Protein phosphatase Mn(2+)-dependent 1K (372 aa).

Residues 1-29 (MLSTAFITLVRSGRNQVKKRVLLSSILLQ) constitute a mitochondrion transit peptide. Positions 46 to 61 (RCSRFDPDGSGQPATW) are critical for association with the BCKDH complex. The PPM-type phosphatase domain maps to 94-346 (NVGCASLIGK…DNSTAVVVPF (253 aa)). Mn(2+) is bound by residues D127 and G128. S248 is subject to Phosphoserine. Mn(2+) contacts are provided by D298 and D337.

This sequence belongs to the PP2C family. Interacts with E1 and E2 components of the branched-chain alpha-ketoacid dehydrogenase (BCKDH) complex. Interacts with both BCKDHA and BCKDHB chains of the E1 subunit. Interacts with the 24-meric DBT/E2 core of the BCKD complex with a 1:1 stoichiometry; the N-terminal region (residues 49-61) of PPM1K and C-terminal linker of the lipoyl domain of DBT/E2 (residues 145-160) are critical for this interaction whereas the lipoyl prosthetic group is dispensable. Competes with BCKDK for binding to DBT/E2; this interaction is modulated by branched-chain alpha-keto acids (BCKAs). At steady state, BCKDH holoenzyme preferentially binds BCKDK and BCKDHA/E1 is phosphorylated. In response to high levels of BCKAs, BCKDK is replaced by PPM1K leading to BCKDHA/E1 dephosphorylation. Requires Mn(2+) as cofactor.

The protein resides in the mitochondrion matrix. The catalysed reaction is O-phospho-L-seryl-[3-methyl-2-oxobutanoate dehydrogenase] + H2O = L-seryl-[3-methyl-2-oxobutanoate dehydrogenase] + phosphate. The enzyme catalyses O-phospho-L-seryl-[protein] + H2O = L-seryl-[protein] + phosphate. It functions in the pathway protein modification. Functionally, serine/threonine-protein phosphatase component of macronutrients metabolism. Together with BCKDK serves as a metabolic regulatory node that coordinates branched-chain amino acids (BCAAs) and protein synthesis with glucose and lipid metabolism via two distinct phosphoprotein targets: BCKDHA/E1a subunit of the branched-chain alpha-ketoacid dehydrogenase (BCKDH) complex and ACLY, a lipogenic enzyme of Krebs cycle. At high levels of branched-chain ketoacids (BCKAs), dephosphorylates and activates mitochondrial BCKDH complex, a multisubunit complex consisting of three components, heterotetrameric E1 composed of BCKDHA and BCKDHB chains, 24-meric E2 core composed of DBT and homodimeric E3 composed of DLD, each involved in different steps of BCAA catabolism. Tightly associates with the E2 subunit of BCKDH complex and dephosphorylates Ser-333 of BCKDHA chain of the E1 subunit likely through on-off binding to individual E2 subunits of the 24-meric E2 core to increase the efficiency of the dephosphorylation reaction. Appears to dephosphorylate and inactivate cytosolic ACLY in response to changes of cellular carbohydrate abundance. Overnutrition and in particular high-fructose diet, activates MLXIPL/ChREBP leading to increased BCKDK to PPM1K ratio, phosphorylation of ACLY on Ser-454 and activation of its enzymatic activity that ultimately results in the generation of acetyl-CoA and malonyl-CoA immediate substrates of de novo lipogenesis. Recognizes phosphosites having SxS or RxxS motifs and strictly depends on Mn(2+) ions for the phosphatase activity. Regulates Ca(2+)-induced opening of mitochondrial transition pore and apoptotic cell death. This Rattus norvegicus (Rat) protein is Protein phosphatase Mn(2+)-dependent 1K (Ppm1k).